A 255-amino-acid polypeptide reads, in one-letter code: Syntaxin-23 (255 aa).

Residues 1–31 (MSFQDLEAGRGRSLASSRNINGGGSRQDTTQ) are disordered. S2 carries the post-translational modification N-acetylserine. Residues 14–31 (LASSRNINGGGSRQDTTQ) are compositionally biased toward polar residues. The 63-residue stretch at 184 to 246 (EAVIEEREQG…AQGKSHLVRH (63 aa)) folds into the t-SNARE coiled-coil homology domain.

This sequence belongs to the syntaxin family. Part of the t-SNARE complex. Interacts with RGS1. Expressed at higher levels in leaves, flowers and stems than in roots.

It is found in the membrane. May function in the docking or fusion of transport vesicles with the prevacuolar membrane. The chain is Syntaxin-23 (SYP23) from Arabidopsis thaliana (Mouse-ear cress).